The sequence spans 79 residues: Small ribosomal subunit protein uS17 (79 aa).

It belongs to the universal ribosomal protein uS17 family. In terms of assembly, part of the 30S ribosomal subunit.

Functionally, one of the primary rRNA binding proteins, it binds specifically to the 5'-end of 16S ribosomal RNA. In Rhodospirillum rubrum (strain ATCC 11170 / ATH 1.1.1 / DSM 467 / LMG 4362 / NCIMB 8255 / S1), this protein is Small ribosomal subunit protein uS17.